A 386-amino-acid chain; its full sequence is Protein DOM34 (386 aa).

It belongs to the eukaryotic release factor 1 family. Pelota subfamily. In terms of assembly, monomer. Component of the Dom34-Hbs1 complex, also named Pelota-HBS1L complex, composed of DOM34 and HBS1. A divalent metal cation serves as cofactor.

It is found in the cytoplasm. Functionally, component of the Dom34-Hbs1 complex, a complex that recognizes stalled ribosomes and triggers the No-Go Decay (NGD) pathway. In the Dom34-Hbs1 complex, DOM34 recognizes ribosomes stalled at the 3' end of an mRNA and engages stalled ribosomes by destabilizing mRNA in the mRNA channel. Following ribosome-binding, the Dom34-Hbs1 complex promotes the disassembly of stalled ribosomes, followed by degradation of damaged mRNAs as part of the NGD pathway. The Dom34-Hbs1 complex is also involved in non-functional rRNA decay. In Saccharomyces cerevisiae (strain ATCC 204508 / S288c) (Baker's yeast), this protein is Protein DOM34.